A 519-amino-acid polypeptide reads, in one-letter code: Maturase K (519 aa).

Belongs to the intron maturase 2 family. MatK subfamily.

The protein localises to the plastid. The protein resides in the chloroplast. Its function is as follows. Usually encoded in the trnK tRNA gene intron. Probably assists in splicing its own and other chloroplast group II introns. This Cycas panzhihuaensis (Dukou cycad) protein is Maturase K.